The primary structure comprises 614 residues: Kelch-like protein 40 (614 aa).

Residues 33-100 form the BTB domain; it reads IDCVLKIQGK…IYTSEIEITE (68 aa). The BACK domain maps to 135–237; that stretch reads CLAIFRLGLL…PQDYIKNKVE (103 aa). 5 Kelch repeats span residues 353 to 405, 406 to 455, 456 to 503, 504 to 550, and 552 to 606; these read QLFV…ESEN, SIYL…SHDN, LVYV…VHKG, KIFI…SMNG, and LYAI…AARL.

Belongs to the KLHL40 family. Component of the BCR(KLHL40) E3 ubiquitin ligase complex.

The protein localises to the cytoplasm. It is found in the myofibril. The protein resides in the sarcomere. Its subcellular location is the a band. It localises to the i band. Functionally, substrate-specific adapter of a BCR (BTB-CUL3-RBX1) E3 ubiquitin ligase complex that acts as a key regulator of skeletal muscle development. The sequence is that of Kelch-like protein 40 (klhl40) from Xenopus laevis (African clawed frog).